Reading from the N-terminus, the 202-residue chain is Transcription antitermination protein NusB (202 aa).

Over residues 1-11 the composition is skewed to basic and acidic residues; it reads MTEERTADNKA. Disordered stretches follow at residues 1-21 and 169-202; these read MTEE…KRHG and SAAK…SDEA.

It belongs to the NusB family.

Involved in transcription antitermination. Required for transcription of ribosomal RNA (rRNA) genes. Binds specifically to the boxA antiterminator sequence of the ribosomal RNA (rrn) operons. The sequence is that of Transcription antitermination protein NusB from Corynebacterium jeikeium (strain K411).